Consider the following 2197-residue polypeptide: MSSSIVSQLQALKSVLQADTEPSKRPFTRPSILFSPKEAADFDIESIYELGLKGLEVLGNKDERFKNYMNDLFSHKSKEIDRELLGKEENARIDSSISSYLRLLSGYLQFRASLETLEYLIRRYKIHIYNLEDVVLCALPYHDTHAFVRIVQLLSTGNSKWKFLDGVKNSGAPPPRSVIVQQCIRDKQVLEALCDYASRTKKYQPSKPVVSFSTAVVVGVLGSVPTVDGDIVKTILPFVDSGLQSGVKGCLDQQAGALMVVGMLANRAVLNTNLIKRLMRSIIDIGREHAKESSDPHSLRLSLMALINFVQLQSVDLIPRKALDLFNEIRDISGVLLGLSKEFNIKRFLAVLLDSLLFYSSSDDKCCEVLASIIETVPVSNLVDHLISKVFSLCMTQYQKNSDFRSSTSGSWAKKFLVVVSKKYPAELRAAVPKFLEATEVQSKKEDLKLEMLSCMLDGNSDMSHPFVDSKLWFRLHHPRAAVRCAALSSLNGVLKDDSSKAENLVTIQDAILRQLWDDDLAVVQAALSFDKLPNIITSSGLLDALLHVVKRCVGILVSGVSHNVQLAVDVVALSLKIAVSSFGNQTDSTEKVTSAMFPFLLIQPKTWNLNLLVLKLGKDVNWPLFKNLAADDGMKKLPDIMSTNLSSISMDIINDLGEALSLDPDERRIELIERACNYKLSEVLETCSNIKCSEQDRNKLQKGLLIRESVSALNIDVINKLVEAFMMHPADYIQWLTVSCRDSTLSKTLFYMILMHSLQKMNSSSDPSQLLDLFELCFPVLKTEWEELEVEVDVSLKELSKSNCQELLYQLLDTSDFTALNSKVLICLFWKLGESFIKLEPAHDASVLNKRLSSGLEDLFFFFATTRLRHVFKEHLHFRVREAKVCPVLFLSRLISREDVPPLVQIESLRCFSYLCSSGNNEWLIQVFSSFPVLLVPMSSDNQDVKAAAINCIEALFNLRAAIYGSSFDELLGMIVQQRRLILSDNKFFASYLTSLLSSTTNDLLVPVGLQKRFDQSTKENILSVILLCAEDLPAYGKLRVLSLLKDLGIMLMRDEIVKLLSQLLDKRSQYYYKLDKTSQPLSDTEVDLLCLLLECSMMRTSSFKGQSLDDHILSALNVDCMASERPAVISPCLTILEKLSNRFYDELQTDVQIRFFHKLVSMFRSSNGSIQNGAKEAVLRLKLSSSTVVLALDRITQQDTLVIGSLSKKKKQKKNSKSCPEEDINSEEFRSGEKALSFIASLLDMLLLKKDLTHRESLIRPLFKLLQRSMSKEWVKIAFSIEETSLQPPQDVRETTPTFISSIQQTLLLILKDIFDSLNMNPLKAEVANEINVKMLVELAHSSNDGVTRNHIFSLFTAIVKFVPDKVLDHIISILTLVGESTVTQIDSHSKSIFEGFISMVIPFWLSKTKSEEQLLQIFVKVLPDIVEHRRRSIVAYLLGVIGERNGLPALLVLLFKSLISRKDSAWLGNANVSESFASIVKKEWEYSFAMEICEQYSSSTWLSSLVILLQTISKDSKQCFLQMRLVLEFVFQKLQDPEFAFAVSLEPRNNVSVGIQQELQELMKCCICLLQAIDAKKEKDVTSSVRNEIRMRIHDVLMTVTGAMDLSIYFRVVTSLLQQQTDYNGTKKVLGLISERAKDTSSSKMKHKRKISNQKGRNSWLNLDEVAVDSFGKMCEEIVHLINATDDESGVPVKRAAISTLEVLAGRFPSGHPIFRKCLAAVAECISSKNLGVSSSCLRTTGALINVLGPKALIELPCIMKNLVKQSLEVSFASQSGRNATAEEQLLMLSVLVTLEAVIDKLGGFLNPHLGDIMKIMVLHPEYVSDFDKNLKSKANAIRRLLTDKIPVRLTLQPLLRIYNEAVSSGNASLVIAFNMLEDLVVKMDRSSIVSSHGKIFDQCLVALDIRRLNPAAIQNIDDAERSVTSAMVALTKKLTESEFRPLFIRSIDWAESDVVDGSGSENKSIDRAISFYGLVDRLCESHRSIFVPYFKYVLDGIVAHLTTAEASVSTRKKKKAKIQQTSDSIQPKSWHLRALVLSCLKNCFLHDTGSLKFLDTNNFQVLLKPIVSQLVVEPPSSLKEHPHVPSVDEVDDLLVSCIGQMAVASGSDLLWKPLNHEVLMQTRSESVRSRMLSLRSVKQMLDNLKEEYLVLLAETIPFLAELLEDVELSVKSLAQDIIKQMEEMSGESLAEYL.

Serine 2 is modified (N-acetylserine). One copy of the HEAT repeat lies at 2159–2195 (TIPFLAELLEDVELSVKSLAQDIIKQMEEMSGESLAE).

This sequence belongs to the HEATR1/UTP10 family.

Its subcellular location is the nucleus. The protein resides in the nucleolus. Functionally, involved in nucleolar processing of pre-18S ribosomal RNA. Involved in ribosome biosynthesis. This is an uncharacterized protein from Arabidopsis thaliana (Mouse-ear cress).